Reading from the N-terminus, the 800-residue chain is MAALAEEQTEVAVKLEPEGPPTLLPPQAGDGAGEGSGGTTNNGPNGGGGNVAASSSTGGDGGTPKPTVAVSAAAPAGAAPVPAAAPDAGAPHDRQTLLAVLQFLRQSKLREAEEALRREAGLLEEAVAGSGAPGEVDSAGAEVTSALLSRVTASAPGPAAPDPPGTGASGATVVSGSASGPAAPGKVGSVAVEDQPDVSAVLSAYNQQGDPTMYEEYYSGLKHFIECSLDCHRAELSQLFYPLFVHMYLELVYNQHENEAKSFFEKFHGDQECYYQDDLRVLSSLTKKEHMKGNETMLDFRTSKFVLRISRDSYQLLKRHLQEKQNNQIWNIVQEHLYIDIFDGMPRSKQQIDAMVGSLAGEAKREANKSKVFFGLLKEPEIEVPLDDEDEEGENEEGKPKKKKPKKDSIGSKSKKQDPNAPPQNRIPLPELKDSDKLDKIMNMKETTKRVRLGPDCLPSICFYTFLNAYQGLTAVDVTDDSSLIAGGFADSTVRVWSVTPKKLRSVKQASDLSLIDKESDDVLERIMDEKTASELKILYGHSGPVYGASFSPDRNYLLSSSEDGTVRLWSLQTFTCLVGYKGHNYPVWDTQFSPYGYYFVSGGHDRVARLWATDHYQPLRIFAGHLADVNCTRFHPNSNYVATGSADRTVRLWDVLNGNCVRIFTGHKGPIHSLTFSPNGRFLATGATDGRVLLWDIGHGLMVGELKGHTDTVCSLRFSRDGEILASGSMDNTVRLWDAIKAFEDLETDDFTTATGHINLPENSQELLLGTYMTKSTPVVHLHFTRRNLVLAAGAYSPQ.

A disordered region spans residues 1-74; the sequence is MAALAEEQTE…KPTVAVSAAA (74 aa). Residues 30–50 show a composition bias toward gly residues; the sequence is DGAGEGSGGTTNNGPNGGGGN. One can recognise a LisH domain in the interval 92-124; it reads HDRQTLLAVLQFLRQSKLREAEEALRREAGLLE. A disordered region spans residues 153 to 189; the sequence is ASAPGPAAPDPPGTGASGATVVSGSASGPAAPGKVGS. The segment covering 165 to 189 has biased composition (low complexity); that stretch reads GTGASGATVVSGSASGPAAPGKVGS. An NTD2; involved in homo-dimerization; also involved in TFIID-TFIIF contacts in the RNA Pol II pre-initiation complex (PIC) region spans residues 194–340; sequence DQPDVSAVLS…NIVQEHLYID (147 aa). Residues 384–395 are compositionally biased toward acidic residues; the sequence is VPLDDEDEEGEN. The tract at residues 384–438 is disordered; it reads VPLDDEDEEGENEEGKPKKKKPKKDSIGSKSKKQDPNAPPQNRIPLPELKDSDKL. A compositionally biased stretch (basic and acidic residues) spans 407–418; that stretch reads KDSIGSKSKKQD. 6 WD repeats span residues 468–507, 541–580, 583–624, 625–666, 667–706, and 709–748; these read NAYQ…LRSV, GHSG…CLVG, GHNY…RIFA, GHLA…RIFT, GHKG…MVGE, and GHTD…EDLE.

Belongs to the WD repeat TAF5 family. Homodimer. Component of the TFIID basal transcription factor complex, composed of TATA-box-binding protein TBP, and a number of TBP-associated factors (TAFs), including TAF1, TAF2, TAF3, TAF4, TAF5, TAF6, TAF7, TAF8, TAF9, TAF10, TAF11, TAF12 and TAF13. The TFIID complex structure can be divided into 3 modules TFIID-A, TFIID-B, and TFIID-C. TAF5 forms the TFIID-A module together with TAF3 and TBP, and in TFIID-B with TAF8. Component of the TFTC-HAT complex, at least composed of TAF5L, TAF6L, TADA3L, SUPT3H/SPT3, TAF2, TAF4, TAF5, GCN5L2/GCN5, TAF10 and TRRAP. TBP is not part of the TFTC-HAT complex. Interacts strongly with the histone H4-related TAF6 and the histone H3-related TAF9, as well as a stable complex comprised of both TAF6 and TAF9. Apparently weaker interactions with TBP, TAF1, TAF11, and TAF12, but not TAF7, also have been observed. In terms of assembly, (Microbial infection) Interacts with SV40 Large T antigen.

It is found in the nucleus. In terms of biological role, the TFIID basal transcription factor complex plays a major role in the initiation of RNA polymerase II (Pol II)-dependent transcription. TFIID recognizes and binds promoters with or without a TATA box via its subunit TBP, a TATA-box-binding protein, and promotes assembly of the pre-initiation complex (PIC). The TFIID complex consists of TBP and TBP-associated factors (TAFs), including TAF1, TAF2, TAF3, TAF4, TAF5, TAF6, TAF7, TAF8, TAF9, TAF10, TAF11, TAF12 and TAF13. The TFIID complex structure can be divided into 3 modules TFIID-A, TFIID-B, and TFIID-C. TAF5 is involved in two modules of TFIID, in TFIID-A together with TAF3 and TBP, and in TFIID-B with TAF8. Involved in contacts between TFIID and TFIIF in the PIC. This Homo sapiens (Human) protein is Transcription initiation factor TFIID subunit 5 (TAF5).